A 247-amino-acid polypeptide reads, in one-letter code: ATP synthase delta chain, chloroplastic (247 aa).

The transit peptide at Met-1–Arg-60 directs the protein to the chloroplast.

This sequence belongs to the ATPase delta chain family. In terms of assembly, F-type ATPases have 2 components, CF(1) - the catalytic core - and CF(0) - the membrane proton channel. CF(1) has five subunits: alpha(3), beta(3), gamma(1), delta(1), epsilon(1). CF(0) has three main subunits: a, b and c.

It localises to the plastid. The protein localises to the chloroplast thylakoid membrane. Functionally, this protein seems to be part of the stalk that links CF(0) to CF(1). It either transmits conformational changes from CF(0) into CF(1) or is implicated in proton conduction. This is ATP synthase delta chain, chloroplastic (ATPD) from Sorghum bicolor (Sorghum).